We begin with the raw amino-acid sequence, 177 residues long: Parathyroid hormone-related protein (177 aa).

Residues 1-24 (MQRRLVQQWSVAVFLLSYAVPSCG) form the signal peptide. The propeptide occupies 25 to 34 (RSVEGLSRRL). Positions 57–68 (RFFLHHLIAEIH) are important for receptor binding. The disordered stretch occupies residues 74 to 177 (ATSEVSPNSK…TSLELDSRRH (104 aa)). The span at 76–90 (SEVSPNSKPSPNTKN) shows a compositional bias: polar residues. Residues 108 to 129 (TNKVETYKEQPLKTPGKKKKGK) carry the Nuclear localization signal motif. Residues 109-118 (NKVETYKEQP) show a composition bias toward basic and acidic residues. Residues 122–132 (PGKKKKGKPGK) are compositionally biased toward basic residues.

This sequence belongs to the parathyroid hormone family. In terms of assembly, interacts with PTH1R (via N-terminal extracellular domain). Post-translationally, there are 3 principal secretory forms, called PTHrP[1-36], PTHrP[38-94], and osteostatin (PTHrP[107-139]) arising from endoproteolytic cleavage of the initial translation product. Each of these secretory forms is believed to have one or more of its own receptors that mediates the normal paracrine, autocrine and endocrine actions. In terms of tissue distribution, ubiquitous. Also expressed in the mammary gland.

It localises to the secreted. The protein localises to the cytoplasm. It is found in the nucleus. Functionally, neuroendocrine peptide which is a critical regulator of cellular and organ growth, development, migration, differentiation and survival and of epithelial calcium ion transport. Acts by binding to its receptor, PTH1R, activating G protein-coupled receptor signaling. Regulates endochondral bone development and epithelial-mesenchymal interactions during the formation of the mammary glands and teeth. Required for skeletal homeostasis. Promotes mammary mesenchyme differentiation and bud outgrowth by modulating mesenchymal cell responsiveness to BMPs. Up-regulates BMPR1A expression in the mammary mesenchyme and this increases the sensitivity of these cells to BMPs and allows them to respond to BMP4 in a paracrine and/or autocrine fashion. BMP4 signaling in the mesenchyme, in turn, triggers epithelial outgrowth and augments MSX2 expression, which causes the mammary mesenchyme to inhibit hair follicle formation within the nipple sheath. Promotes colon cancer cell migration and invasion in an integrin alpha-6/beta-1-dependent manner through activation of Rac1. In terms of biological role, potent inhibitor of osteoclastic bone resorption. The chain is Parathyroid hormone-related protein from Homo sapiens (Human).